A 456-amino-acid polypeptide reads, in one-letter code: MVDNKVYLSVSDLNFYISQKFKNDPYLHKVFLQGELSNFRFRMNSHQYFSLKDEKSKINVVMFRSFFEKLKFKPEEGMKVYVSGYVDVYGPQGSYQFYAQTMEPAGLGALYEQLRQLQEKLAKEGLFNEEHKKKIPLFPDRIAVVTSASGAVIHDIMVTANRRFPHAEIDLYPAKVQGDEAADTIVAALQQIQAQGDKYDVVIIGRGGGSLEDLWPFNEEKVVRQIYAMQMPVISSVGHETDTTLADLVADARAATPTAAAEYATPNLVDVLTQIVQLRARLYAAVQANIHTKHQILDRLKNAPVLQEPTRIYDQQIQQVDMLIHRLNQAMDNRLQHDGSTLRLLQERLKALSPSRKLEQLERERNFVVSNLFSTMNNYLKDQRNRLNRAMQQLDDISPLKTISRGYVYTTDQKGNIVTSVDQLKIDEKLKLHFKDGQVQVNVENIRREKNGNQEK.

Belongs to the XseA family. In terms of assembly, heterooligomer composed of large and small subunits.

Its subcellular location is the cytoplasm. It catalyses the reaction Exonucleolytic cleavage in either 5'- to 3'- or 3'- to 5'-direction to yield nucleoside 5'-phosphates.. Bidirectionally degrades single-stranded DNA into large acid-insoluble oligonucleotides, which are then degraded further into small acid-soluble oligonucleotides. The sequence is that of Exodeoxyribonuclease 7 large subunit from Lactobacillus johnsonii (strain CNCM I-12250 / La1 / NCC 533).